Consider the following 389-residue polypeptide: Major outer membrane porin (389 aa).

The signal sequence occupies residues 1 to 22; sequence MKKLLKSALLFAATGSALSLQA.

The protein belongs to the chlamydial porin (CP) (TC 1.B.2) family. In terms of assembly, part of a disulfide cross-linked outer membrane complex (COMC) composed of the major outer membrane porin (MOMP), the small cysteine-rich protein (OmcA) and the large cysteine-rich periplasmic protein (OmcB).

Its subcellular location is the cell outer membrane. In terms of biological role, in elementary bodies (EBs, the infectious stage, which is able to survive outside the host cell) provides the structural integrity of the outer envelope through disulfide cross-links with the small cysteine-rich protein and the large cysteine-rich periplasmic protein. It has been described in publications as the Sarkosyl-insoluble COMC (Chlamydia outer membrane complex), and serves as the functional equivalent of peptidoglycan. Functionally, permits diffusion of specific solutes through the outer membrane. The protein is Major outer membrane porin (ompA) of Chlamydia abortus (strain DSM 27085 / S26/3) (Chlamydophila abortus).